A 1178-amino-acid chain; its full sequence is DNA-directed RNA polymerase subunit beta (1178 aa).

The disordered stretch occupies residues 1–37 (MLEGCILADSRQSKTAASPSPSRPQSSSNNSVPGAPN). Low complexity predominate over residues 18-33 (SPSPSRPQSSSNNSVP).

The protein belongs to the RNA polymerase beta chain family. In terms of assembly, the RNAP catalytic core consists of 2 alpha, 1 beta, 1 beta' and 1 omega subunit. When a sigma factor is associated with the core the holoenzyme is formed, which can initiate transcription.

The enzyme catalyses RNA(n) + a ribonucleoside 5'-triphosphate = RNA(n+1) + diphosphate. DNA-dependent RNA polymerase catalyzes the transcription of DNA into RNA using the four ribonucleoside triphosphates as substrates. The chain is DNA-directed RNA polymerase subunit beta from Mycobacterium tuberculosis (strain CDC 1551 / Oshkosh).